Consider the following 226-residue polypeptide: X-linked lymphocyte-regulated protein 3A (226 aa).

Positions 1–18 are enriched in basic and acidic residues; sequence MSSRERKATDTAGRHSRM. Positions 1–72 are disordered; sequence MSSRERKATD…QDLVQEFEEP (72 aa). Residues 21–30 are compositionally biased toward polar residues; the sequence is NLSSDDSQNP. Basic and acidic residues-rich tracts occupy residues 39–48 and 56–65; these read EVLDAGREDI and QQARKEKQDL. The stretch at 155–210 forms a coiled coil; the sequence is ETLTLQKNRMEEFKSLCEKYLEKLEVLRDSRGNSIAEELRRLIATLEIKLLMLHNQ.

This sequence belongs to the XLR/SYCP3 family. As to expression, expressed in lymphoid cells.

In Mus musculus (Mouse), this protein is X-linked lymphocyte-regulated protein 3A (Xlr3a).